The primary structure comprises 203 residues: MLTEQQRRELDWEKTDGLMPVIVQHAVSGEVLMLGYMNPEALDKTIESGKVTFFSRTKQRLWTKGETSGNFLNVVNIAPDCDNDTLLVLANPIGPTCHKGTSSCFGDTAHQWLFLYQLEQLLAERKSADPETSYTAKLYASGTKRIAQKVGEEGVETALAATVHDRFELTNEASDLMYHLLVLLQDQDLDLTTVIENLRKRHQ.

The segment at 1–114 (MLTEQQRREL…FGDTAHQWLF (114 aa)) is phosphoribosyl-AMP cyclohydrolase. Positions 115 to 203 (LYQLEQLLAE…VIENLRKRHQ (89 aa)) are phosphoribosyl-ATP pyrophosphohydrolase.

It in the N-terminal section; belongs to the PRA-CH family. The protein in the C-terminal section; belongs to the PRA-PH family.

It is found in the cytoplasm. The enzyme catalyses 1-(5-phospho-beta-D-ribosyl)-ATP + H2O = 1-(5-phospho-beta-D-ribosyl)-5'-AMP + diphosphate + H(+). The catalysed reaction is 1-(5-phospho-beta-D-ribosyl)-5'-AMP + H2O = 1-(5-phospho-beta-D-ribosyl)-5-[(5-phospho-beta-D-ribosylamino)methylideneamino]imidazole-4-carboxamide. It functions in the pathway amino-acid biosynthesis; L-histidine biosynthesis; L-histidine from 5-phospho-alpha-D-ribose 1-diphosphate: step 2/9. It participates in amino-acid biosynthesis; L-histidine biosynthesis; L-histidine from 5-phospho-alpha-D-ribose 1-diphosphate: step 3/9. The protein is Histidine biosynthesis bifunctional protein HisIE of Shigella sonnei (strain Ss046).